The primary structure comprises 230 residues: Ribonuclease HII (230 aa).

Residues 21 to 212 form the RNase H type-2 domain; the sequence is GPVAGVDEVG…VRRVANGSGG (192 aa). 3 residues coordinate a divalent metal cation: Asp27, Glu28, and Asp121.

The protein belongs to the RNase HII family. It depends on Mn(2+) as a cofactor. Requires Mg(2+) as cofactor.

It localises to the cytoplasm. It carries out the reaction Endonucleolytic cleavage to 5'-phosphomonoester.. Functionally, endonuclease that specifically degrades the RNA of RNA-DNA hybrids. This Mycobacterium avium (strain 104) protein is Ribonuclease HII.